The following is a 426-amino-acid chain: DNA polymerase processivity factor component OPG148 (426 aa).

Belongs to the orthopoxvirus OPG148 family. Interacts with the DNA polymerase catalytic subunit OPG071. Interacts with UDG/OPG116. Component of the uracil-DNA glycosylase(UDG)-OPG148-polymerase complex; OPG148 and UDG form a heterodimeric processivity factor that associates with OPG071 to form the processive polymerase holoenzyme. Interacts with OPG117.

Plays an essential role in viral DNA replication by acting as the polymerase processivity factor together with protein OPG116. Serves as a bridge which links the DNA polymerase OPG071 and the uracil DNA glycosylase. This is DNA polymerase processivity factor component OPG148 (OPG148) from Vaccinia virus (strain Copenhagen) (VACV).